Reading from the N-terminus, the 310-residue chain is Elongation factor Ts (310 aa).

Residues 80–83 (TDFV) are involved in Mg(2+) ion dislocation from EF-Tu.

It belongs to the EF-Ts family.

The protein localises to the cytoplasm. Its function is as follows. Associates with the EF-Tu.GDP complex and induces the exchange of GDP to GTP. It remains bound to the aminoacyl-tRNA.EF-Tu.GTP complex up to the GTP hydrolysis stage on the ribosome. This chain is Elongation factor Ts, found in Methylocella silvestris (strain DSM 15510 / CIP 108128 / LMG 27833 / NCIMB 13906 / BL2).